Here is a 219-residue protein sequence, read N- to C-terminus: Glycosylphosphatidylinositol anchor biosynthesis protein 11 (219 aa).

At 1 to 45 (MPAKKRTRKTVKKTVSFSDDTTLTTHQNREKKNVDHDRPPVYVRK) the chain is on the cytoplasmic side. Ser-16 is subject to Phosphoserine. The chain crosses the membrane as a helical span at residues 46–66 (TPLMTFPYHLVALLYYYVFVS). A topological domain (lumenal) is located at residue Ser-67. The chain crosses the membrane as a helical span at residues 68 to 88 (NFNTVKLLSFLIPTQVAYLVL). Residues 89-108 (QFNKCTVYGNKIIKINYSLT) are Cytoplasmic-facing. The helical transmembrane segment at 109-129 (IICLGVTFLLSFPTMLLTILF) threads the bilayer. The Lumenal segment spans residues 130–135 (GAPLMD). A helical membrane pass occupies residues 136 to 156 (LLWETWLLSLHFAFLAYPAVY). Topologically, residues 157 to 170 (SVFNCDFKVGLWKK) are cytoplasmic. The chain crosses the membrane as a helical span at residues 171-191 (YFIFIVVGGWISCVVIPLDWD). Over 192 to 198 (RDWQNWP) the chain is Lumenal. The chain crosses the membrane as a helical span at residues 199-217 (IPIVVGGYLGALVGYTIGA). The Cytoplasmic portion of the chain corresponds to 218–219 (YI).

Belongs to the PIGF family.

It localises to the endoplasmic reticulum membrane. It participates in glycolipid biosynthesis; glycosylphosphatidylinositol-anchor biosynthesis. Functionally, acts in the GPI biosynthetic pathway between GlcNAc-PI synthesis and GPI transfer to protein. Required for the formation of complete GPI precursors CP1 and CP2. The chain is Glycosylphosphatidylinositol anchor biosynthesis protein 11 (GPI11) from Saccharomyces cerevisiae (strain ATCC 204508 / S288c) (Baker's yeast).